Consider the following 220-residue polypeptide: Iron-sulfur cluster repair protein YtfE (220 aa).

It belongs to the RIC family. YtfE subfamily. Homodimer.

It localises to the cytoplasm. Di-iron-containing protein involved in the repair of iron-sulfur clusters damaged by oxidative and nitrosative stress conditions. The chain is Iron-sulfur cluster repair protein YtfE from Escherichia coli O81 (strain ED1a).